The primary structure comprises 414 residues: MDMHCKADPFSAMHRHGGVNQLGGVFVNGRPLPDVVRQRIVELAHQGVRPCDISRQLRVSHGCVSKILGRYYETGSIKPGVIGGSKPKVATPKVVDKIAEYKRQNPTMFAWEIRDRLLAEGICDNDTVPSVSSINRIIRTKVQQPFHPTPDGAGTGVTAPGHTIVPSTASPPVSSASNDPVGSYSINGILGIPRSNGEKRKREEVEVYTDPAHIRGGGGLHLVWTLRDVSEGSVPNGDSQSGVDSLRKHLRADTFTQQQLEALDRVFERPSYPDVFQASEHIKSEQGNEYSLPALTPGLDEVKSSLSASANPELGSNVSGTQTYPVVTGRDMTSTTLPGYPPHVPPTGQGSYPTSTLAGMVPGSEFSGNPYSHPQYTAYNEAWRFSNPALLSSPYYYSAAPRGSAPAAAAYDRH.

Residues 15-141 constitute a DNA-binding region (paired); sequence RHGGVNQLGG…SSINRIIRTK (127 aa). The interval 18 to 74 is PAI subdomain; that stretch reads GVNQLGGVFVNGRPLPDVVRQRIVELAHQGVRPCDISRQLRVSHGCVSKILGRYYET. The interval 93 to 141 is RED subdomain; it reads KVVDKIAEYKRQNPTMFAWEIRDRLLAEGICDNDTVPSVSSINRIIRTK. Thr-225 bears the Phosphothreonine mark.

Interacts with ELGN3; the interaction targets PAX2 for destruction. Interacts with TLE4. In terms of tissue distribution, kidney and nephrogenic rests.

It localises to the nucleus. Transcription factor that may have a role in kidney cell differentiation. In Mus musculus (Mouse), this protein is Paired box protein Pax-2 (Pax2).